We begin with the raw amino-acid sequence, 147 residues long: Large ribosomal subunit protein bL9 (147 aa).

It belongs to the bacterial ribosomal protein bL9 family.

Its function is as follows. Binds to the 23S rRNA. This chain is Large ribosomal subunit protein bL9, found in Phocaeicola vulgatus (strain ATCC 8482 / DSM 1447 / JCM 5826 / CCUG 4940 / NBRC 14291 / NCTC 11154) (Bacteroides vulgatus).